Here is a 211-residue protein sequence, read N- to C-terminus: Protein-L-isoaspartate O-methyltransferase (211 aa).

Residue serine 60 is part of the active site.

It belongs to the methyltransferase superfamily. L-isoaspartyl/D-aspartyl protein methyltransferase family.

The protein localises to the cytoplasm. It carries out the reaction [protein]-L-isoaspartate + S-adenosyl-L-methionine = [protein]-L-isoaspartate alpha-methyl ester + S-adenosyl-L-homocysteine. Functionally, catalyzes the methyl esterification of L-isoaspartyl residues in peptides and proteins that result from spontaneous decomposition of normal L-aspartyl and L-asparaginyl residues. It plays a role in the repair and/or degradation of damaged proteins. The chain is Protein-L-isoaspartate O-methyltransferase from Pseudomonas fluorescens (strain SBW25).